Here is a 470-residue protein sequence, read N- to C-terminus: 6-phospho-beta-galactosidase (470 aa).

The D-galactose 6-phosphate site is built by Gln19, His116, Asn159, Glu160, and Asn297. Glu160 (proton donor) is an active-site residue. Residue Glu375 is the Nucleophile of the active site. D-galactose 6-phosphate contacts are provided by Ser430, Trp431, Lys437, and Tyr439.

It belongs to the glycosyl hydrolase 1 family.

It catalyses the reaction a 6-phospho-beta-D-galactoside + H2O = D-galactose 6-phosphate + an alcohol. It participates in carbohydrate metabolism; lactose degradation; D-galactose 6-phosphate and beta-D-glucose from lactose 6-phosphate: step 1/1. The sequence is that of 6-phospho-beta-galactosidase from Staphylococcus aureus (strain COL).